A 719-amino-acid polypeptide reads, in one-letter code: DNA replication licensing factor MCM7 (719 aa).

A2 carries the N-acetylalanine modification. Residues K15 and K28 each participate in a glycyl lysine isopeptide (Lys-Gly) (interchain with G-Cter in SUMO2) cross-link. 2 positions are modified to phosphoserine: S121 and S314. Residues 332 to 538 (FYEKLAASIA…NDLRLAQHIT (207 aa)) form the MCM domain. Y345 lines the ATP pocket. S365 carries the post-translational modification Phosphoserine. Positions 384, 386, 387, 388, and 489 each coordinate ATP. Residue S500 is modified to Phosphoserine. The short motif at 513–516 (SRFD) is the Arginine finger element. Position 514 (R514) interacts with ATP. Residues 521 to 564 (IQDRPDRDNDLRLAQHITYVHQHSRQPPSQFEPLDMKLMRRYIA) form an interaction with RAD17 region. The segment at 577 to 719 (LADYITAAYV…NASRTRITFV (143 aa)) is interaction with ATRIP. R604 serves as a coordination point for ATP. The residue at position 678 (S678) is a Phosphoserine.

The protein belongs to the MCM family. In terms of assembly, component of the MCM2-7 complex. The complex forms a toroidal hexameric ring with the proposed subunit order MCM2-MCM6-MCM4-MCM7-MCM3-MCM5. Component of the CMG helicase complex, a hexameric ring of related MCM2-7 subunits stabilized by CDC45 and the tetrameric GINS complex. Interacts with the ATR-ATRIP complex and with RAD17. Interacts with TIPIN. Interacts with MCMBP. Interacts with ANKRD17. Component of the replisome complex composed of at least DONSON, MCM2, MCM7, PCNA and TICRR. In terms of processing, O-glycosylated (O-GlcNAcylated), in a cell cycle-dependent manner. Post-translationally, ubiquitinated by ECS(LRR1) E3 ubiquitin-protein ligase complex when forks converge following formation of DNA interstrand cross-links. During mitosis, ubiquitinated by TRAIP when forks converge following formation of DNA interstrand cross-links. Short ubiquitin chains on MCM7 promote recruitment of DNA glycosylase NEIL3. If the interstrand cross-link cannot be cleaved by NEIL3, the ubiquitin chains continue to grow on MCM7, promoting the unloading of the CMG helicase complex by the VCP/p97 ATPase.

Its subcellular location is the nucleus. It is found in the chromosome. It catalyses the reaction ATP + H2O = ADP + phosphate + H(+). In terms of biological role, acts as a component of the MCM2-7 complex (MCM complex) which is the replicative helicase essential for 'once per cell cycle' DNA replication initiation and elongation in eukaryotic cells. Core component of CDC45-MCM-GINS (CMG) helicase, the molecular machine that unwinds template DNA during replication, and around which the replisome is built. The active ATPase sites in the MCM2-7 ring are formed through the interaction surfaces of two neighboring subunits such that a critical structure of a conserved arginine finger motif is provided in trans relative to the ATP-binding site of the Walker A box of the adjacent subunit. The six ATPase active sites, however, are likely to contribute differentially to the complex helicase activity. Required for S-phase checkpoint activation upon UV-induced damage. The protein is DNA replication licensing factor MCM7 of Homo sapiens (Human).